Reading from the N-terminus, the 329-residue chain is DNA-directed RNA polymerase subunit alpha (329 aa).

The tract at residues 1–235 (MQGSVTEFLK…EQLDAFVDLR (235 aa)) is alpha N-terminal domain (alpha-NTD). The segment at 249 to 329 (FDPILLRPVD…NWPPASIAED (81 aa)) is alpha C-terminal domain (alpha-CTD).

The protein belongs to the RNA polymerase alpha chain family. As to quaternary structure, homodimer. The RNAP catalytic core consists of 2 alpha, 1 beta, 1 beta' and 1 omega subunit. When a sigma factor is associated with the core the holoenzyme is formed, which can initiate transcription.

It catalyses the reaction RNA(n) + a ribonucleoside 5'-triphosphate = RNA(n+1) + diphosphate. DNA-dependent RNA polymerase catalyzes the transcription of DNA into RNA using the four ribonucleoside triphosphates as substrates. The sequence is that of DNA-directed RNA polymerase subunit alpha from Actinobacillus pleuropneumoniae serotype 5b (strain L20).